Consider the following 1385-residue polypeptide: DNA-directed RNA polymerase subunit beta' (1385 aa).

Zn(2+)-binding residues include Cys72, Cys74, Cys87, and Cys90. Residues Asp463, Asp465, and Asp467 each contribute to the Mg(2+) site. Cys813, Cys887, Cys894, and Cys897 together coordinate Zn(2+).

The protein belongs to the RNA polymerase beta' chain family. As to quaternary structure, the RNAP catalytic core consists of 2 alpha, 1 beta, 1 beta' and 1 omega subunit. When a sigma factor is associated with the core the holoenzyme is formed, which can initiate transcription. Requires Mg(2+) as cofactor. It depends on Zn(2+) as a cofactor.

The catalysed reaction is RNA(n) + a ribonucleoside 5'-triphosphate = RNA(n+1) + diphosphate. In terms of biological role, DNA-dependent RNA polymerase catalyzes the transcription of DNA into RNA using the four ribonucleoside triphosphates as substrates. This Trichlorobacter lovleyi (strain ATCC BAA-1151 / DSM 17278 / SZ) (Geobacter lovleyi) protein is DNA-directed RNA polymerase subunit beta'.